The sequence spans 429 residues: Formate-dependent phosphoribosylglycinamide formyltransferase (429 aa).

N(1)-(5-phospho-beta-D-ribosyl)glycinamide is bound by residues 26–27 and Glu86; that span reads EL. ATP is bound by residues Arg118, Lys159, 199–202, and Glu207; that span reads EEHI. The ATP-grasp domain occupies 123-319; sequence ETLVKEAKVP…EFGLHLRAVL (197 aa). Mg(2+) is bound by residues Glu276 and Glu288. N(1)-(5-phospho-beta-D-ribosyl)glycinamide-binding positions include Asp295, Lys375, and 382-383; that span reads RR.

Belongs to the PurK/PurT family. Homodimer.

It carries out the reaction N(1)-(5-phospho-beta-D-ribosyl)glycinamide + formate + ATP = N(2)-formyl-N(1)-(5-phospho-beta-D-ribosyl)glycinamide + ADP + phosphate + H(+). It participates in purine metabolism; IMP biosynthesis via de novo pathway; N(2)-formyl-N(1)-(5-phospho-D-ribosyl)glycinamide from N(1)-(5-phospho-D-ribosyl)glycinamide (formate route): step 1/1. Its function is as follows. Involved in the de novo purine biosynthesis. Catalyzes the transfer of formate to 5-phospho-ribosyl-glycinamide (GAR), producing 5-phospho-ribosyl-N-formylglycinamide (FGAR). Formate is provided by PurU via hydrolysis of 10-formyl-tetrahydrofolate. The sequence is that of Formate-dependent phosphoribosylglycinamide formyltransferase from Pyrococcus abyssi (strain GE5 / Orsay).